Here is a 111-residue protein sequence, read N- to C-terminus: Large ribosomal subunit protein eL31 (111 aa).

It belongs to the eukaryotic ribosomal protein eL31 family.

This is Large ribosomal subunit protein eL31 (rpl31) from Dictyostelium discoideum (Social amoeba).